We begin with the raw amino-acid sequence, 474 residues long: 3-isopropylmalate dehydratase large subunit (474 aa).

Positions 355, 415, and 418 each coordinate [4Fe-4S] cluster.

Belongs to the aconitase/IPM isomerase family. LeuC type 1 subfamily. As to quaternary structure, heterodimer of LeuC and LeuD. [4Fe-4S] cluster serves as cofactor.

It catalyses the reaction (2R,3S)-3-isopropylmalate = (2S)-2-isopropylmalate. It participates in amino-acid biosynthesis; L-leucine biosynthesis; L-leucine from 3-methyl-2-oxobutanoate: step 2/4. Functionally, catalyzes the isomerization between 2-isopropylmalate and 3-isopropylmalate, via the formation of 2-isopropylmaleate. In Shewanella oneidensis (strain ATCC 700550 / JCM 31522 / CIP 106686 / LMG 19005 / NCIMB 14063 / MR-1), this protein is 3-isopropylmalate dehydratase large subunit.